The following is a 613-amino-acid chain: Dihydroxy-acid dehydratase (613 aa).

Aspartate 81 serves as a coordination point for Mg(2+). [2Fe-2S] cluster is bound at residue cysteine 122. Positions 123 and 124 each coordinate Mg(2+). At lysine 124 the chain carries N6-carboxylysine. Cysteine 193 serves as a coordination point for [2Fe-2S] cluster. A Mg(2+)-binding site is contributed by glutamate 489. The active-site Proton acceptor is the serine 515.

Belongs to the IlvD/Edd family. Homodimer. It depends on [2Fe-2S] cluster as a cofactor. Mg(2+) serves as cofactor.

The catalysed reaction is (2R)-2,3-dihydroxy-3-methylbutanoate = 3-methyl-2-oxobutanoate + H2O. The enzyme catalyses (2R,3R)-2,3-dihydroxy-3-methylpentanoate = (S)-3-methyl-2-oxopentanoate + H2O. Its pathway is amino-acid biosynthesis; L-isoleucine biosynthesis; L-isoleucine from 2-oxobutanoate: step 3/4. It participates in amino-acid biosynthesis; L-valine biosynthesis; L-valine from pyruvate: step 3/4. Functionally, functions in the biosynthesis of branched-chain amino acids. Catalyzes the dehydration of (2R,3R)-2,3-dihydroxy-3-methylpentanoate (2,3-dihydroxy-3-methylvalerate) into 2-oxo-3-methylpentanoate (2-oxo-3-methylvalerate) and of (2R)-2,3-dihydroxy-3-methylbutanoate (2,3-dihydroxyisovalerate) into 2-oxo-3-methylbutanoate (2-oxoisovalerate), the penultimate precursor to L-isoleucine and L-valine, respectively. The protein is Dihydroxy-acid dehydratase of Pseudomonas putida (strain ATCC 47054 / DSM 6125 / CFBP 8728 / NCIMB 11950 / KT2440).